We begin with the raw amino-acid sequence, 201 residues long: FMN-dependent NADH:quinone oxidoreductase (201 aa).

FMN is bound by residues Ser10, 16–18, 96–99, and 140–143; these read SQS, MYNF, and SRGG.

This sequence belongs to the azoreductase type 1 family. Homodimer. The cofactor is FMN.

It catalyses the reaction 2 a quinone + NADH + H(+) = 2 a 1,4-benzosemiquinone + NAD(+). It carries out the reaction N,N-dimethyl-1,4-phenylenediamine + anthranilate + 2 NAD(+) = 2-(4-dimethylaminophenyl)diazenylbenzoate + 2 NADH + 2 H(+). In terms of biological role, quinone reductase that provides resistance to thiol-specific stress caused by electrophilic quinones. Also exhibits azoreductase activity. Catalyzes the reductive cleavage of the azo bond in aromatic azo compounds to the corresponding amines. This Salmonella choleraesuis (strain SC-B67) protein is FMN-dependent NADH:quinone oxidoreductase.